The following is a 192-amino-acid chain: Der GTPase-activating protein YihI (192 aa).

The segment covering 1 to 12 (MSAKQPNRKPAG) has biased composition (basic residues). 2 disordered regions span residues 1-87 (MSAK…IKEK) and 145-192 (DTDD…PKKK). Residues 13 to 26 (KRKESDASAQEGRE) are compositionally biased toward basic and acidic residues. The segment covering 27–36 (RKRAAKRKGL) has biased composition (basic residues). Acidic residues predominate over residues 145–172 (DTDDDEDEADFDEADFDEPGQPASEEEL). Residues 183-192 (PEPKPEPKKK) show a composition bias toward basic and acidic residues.

This sequence belongs to the YihI family. Interacts with Der.

Its function is as follows. A GTPase-activating protein (GAP) that modifies Der/EngA GTPase function. May play a role in ribosome biogenesis. The chain is Der GTPase-activating protein YihI from Aeromonas hydrophila subsp. hydrophila (strain ATCC 7966 / DSM 30187 / BCRC 13018 / CCUG 14551 / JCM 1027 / KCTC 2358 / NCIMB 9240 / NCTC 8049).